The sequence spans 294 residues: MKTLQAAFFLVAFVPLVKPAPPIQQDSPKFYEYVDADFATGSLIQQDYEMLPKDTIKDGTNVSLDTALRLQADDSELSARPTKDTNLPTCLLCVCLSGSVYCEEIDIEAVPPLPKETAYLYARFNKIKRIAVSDFADITTLRRIDFSGNMIEEIEDGAFSKLLLLEELSLAENRLVKLPVLPPKLTTFNANQNRIKSRGIKNNAFKKLTNLAYLYLGHNALESVPLNLPESLRILHLQHNNITTINDDTFCKSNNTRYIRTRMDEIRMEGNPILLAKHVNAFSCLRTLPVGTYY.

The N-terminal stretch at 1-19 (MKTLQAAFFLVAFVPLVKP) is a signal peptide. A glycan (N-linked (GlcNAc...) asparagine) is linked at Asn-61. LRR repeat units lie at residues 108–127 (EAVPPLPKETAYLYARFNKI), 128–151 (KRIAVSDFADITTLRRIDFSGNMI), 152–175 (EEIEDGAFSKLLLLEELSLAENRL), 176–195 (VKLPVLPPKLTTFNANQNRI), 196–221 (KSRGIKNNAFKKLTNLAYLYLGHNAL), 222–242 (ESVPLNLPESLRILHLQHNNI), and 243–273 (TTINDDTFCKSNNTRYIRTRMDEIRMEGNPI). 2 N-linked (GlcNAc...) asparagine glycosylation sites follow: Asn-241 and Asn-254. Residues Cys-251 and Cys-284 are joined by a disulfide bond.

Belongs to the small leucine-rich proteoglycan (SLRP) family. SLRP class III subfamily. Post-translationally, the composition of the N-linked chains or the substitution of the N-linked sites is different between embryonic and adult tissues. In terms of processing, contains keratan sulfate.

It localises to the secreted. Its subcellular location is the extracellular space. It is found in the extracellular matrix. Induces bone formation in conjunction with TGF-beta-1 or TGF-beta-2. This Gallus gallus (Chicken) protein is Mimecan (OGN).